A 382-amino-acid polypeptide reads, in one-letter code: Diphosphomevalonate decarboxylase ERG19 (382 aa).

Residues 22–25 (YWGK), Arg-78, 157–162 (SGSACR), and Thr-213 contribute to the (R)-5-diphosphomevalonate site.

The protein belongs to the diphosphomevalonate decarboxylase family. Homodimer.

It catalyses the reaction (R)-5-diphosphomevalonate + ATP = isopentenyl diphosphate + ADP + phosphate + CO2. It participates in isoprenoid biosynthesis; isopentenyl diphosphate biosynthesis via mevalonate pathway; isopentenyl diphosphate from (R)-mevalonate: step 3/3. Functionally, diphosphomevalonate decarboxylase; part of the second module of ergosterol biosynthesis pathway that includes the middle steps of the pathway. MVD1 converts diphosphomevalonate into isopentenyl diphosphate. The second module is carried out in the vacuole and involves the formation of farnesyl diphosphate, which is also an important intermediate in the biosynthesis of ubiquinone, dolichol, heme and prenylated proteins. Activity by the mevalonate kinase ERG12 (FG05912) first converts mevalonate into 5-phosphomevalonate. 5-phosphomevalonate is then further converted to 5-diphosphomevalonate by the phosphomevalonate kinase ERG8 (FG09764). The diphosphomevalonate decarboxylase ERG19 (FG10424) then produces isopentenyl diphosphate. The isopentenyl-diphosphate delta-isomerase IDI1 (FG09722) then catalyzes the 1,3-allylic rearrangement of the homoallylic substrate isopentenyl (IPP) to its highly electrophilic allylic isomer, dimethylallyl diphosphate (DMAPP). Finally the farnesyl diphosphate synthase ERG20 (FG06784) catalyzes the sequential condensation of isopentenyl pyrophosphate with dimethylallyl pyrophosphate, and then with the resultant geranylpyrophosphate to the ultimate product farnesyl pyrophosphate. In Gibberella zeae (strain ATCC MYA-4620 / CBS 123657 / FGSC 9075 / NRRL 31084 / PH-1) (Wheat head blight fungus), this protein is Diphosphomevalonate decarboxylase ERG19.